An 83-amino-acid polypeptide reads, in one-letter code: Small ribosomal subunit protein eS21 (83 aa).

It belongs to the eukaryotic ribosomal protein eS21 family. As to quaternary structure, component of the 40S small ribosomal subunit.

It localises to the cytoplasm. The protein localises to the cytosol. The protein resides in the rough endoplasmic reticulum. Functionally, component of the small ribosomal subunit. The ribosome is a large ribonucleoprotein complex responsible for the synthesis of proteins in the cell. The protein is Small ribosomal subunit protein eS21 (rps21) of Xenopus tropicalis (Western clawed frog).